The chain runs to 231 residues: MARRPRPDGPQHLLALVRSAVPPVHPAGRPFIAAGLAIAAVGHRYRWLRGTGLLAAAACAGFFRHPQRVPPTRPAAIVAPADGVICAIDSAAPPAELSMGDTPLPRVSIFLSILDAHVQRAPVSGEVIAVQHRPGRFGSADLPEASDDNERTSVRIRMPNGAEVVAVQIAGLVARRIVCDAHVGDKLAIGDTYGLIRFGSRLDTYLPAGAEPIVNVGQRAVAGETVLAECR.

Residue Ser200 is the Schiff-base intermediate with substrate; via pyruvic acid of the active site. Position 200 is a pyruvic acid (Ser); by autocatalysis (Ser200).

It belongs to the phosphatidylserine decarboxylase family. PSD-A subfamily. As to quaternary structure, heterodimer of a large membrane-associated beta subunit and a small pyruvoyl-containing alpha subunit. Requires pyruvate as cofactor. Post-translationally, is synthesized initially as an inactive proenzyme. Formation of the active enzyme involves a self-maturation process in which the active site pyruvoyl group is generated from an internal serine residue via an autocatalytic post-translational modification. Two non-identical subunits are generated from the proenzyme in this reaction, and the pyruvate is formed at the N-terminus of the alpha chain, which is derived from the carboxyl end of the proenzyme. The post-translation cleavage follows an unusual pathway, termed non-hydrolytic serinolysis, in which the side chain hydroxyl group of the serine supplies its oxygen atom to form the C-terminus of the beta chain, while the remainder of the serine residue undergoes an oxidative deamination to produce ammonia and the pyruvoyl prosthetic group on the alpha chain.

It localises to the cell membrane. The catalysed reaction is a 1,2-diacyl-sn-glycero-3-phospho-L-serine + H(+) = a 1,2-diacyl-sn-glycero-3-phosphoethanolamine + CO2. Its pathway is phospholipid metabolism; phosphatidylethanolamine biosynthesis; phosphatidylethanolamine from CDP-diacylglycerol: step 2/2. Functionally, catalyzes the formation of phosphatidylethanolamine (PtdEtn) from phosphatidylserine (PtdSer). The protein is Phosphatidylserine decarboxylase proenzyme of Mycobacterium tuberculosis (strain ATCC 25177 / H37Ra).